Consider the following 261-residue polypeptide: 2,3-dihydro-2,3-dihydroxybenzoate dehydrogenase (261 aa).

NAD(+) is bound at residue Phe-12 to Ala-36. Substrate is bound at residue Ser-144. Tyr-157 (proton acceptor) is an active-site residue.

It belongs to the short-chain dehydrogenases/reductases (SDR) family.

The protein resides in the cytoplasm. It carries out the reaction (2S,3S)-2,3-dihydroxy-2,3-dihydrobenzoate + NAD(+) = 2,3-dihydroxybenzoate + NADH + H(+). It participates in siderophore biosynthesis; bacillibactin biosynthesis. The polypeptide is 2,3-dihydro-2,3-dihydroxybenzoate dehydrogenase (dhbA) (Bacillus subtilis (strain 168)).